Consider the following 267-residue polypeptide: Interleukin-15 receptor subunit alpha (267 aa).

Residues 1-30 form the signal peptide; sequence MAPRRARGCRTLGLPALLLLLLLRPPATRG. A Sushi domain is found at 31-95; the sequence is ITCPPPMSVE…WTTPSLKCIR (65 aa). The Extracellular segment spans residues 31-205; the sequence is ITCPPPMSVE…VYPQGHSDTT (175 aa). Cystine bridges form between C33–C75 and C59–C93. A disordered region spans residues 102-178; that stretch reads QRPAPPSTVT…ESSHGTPSQT (77 aa). A compositionally biased stretch (polar residues) spans 108–124; sequence STVTTAGVTPQPESLSP. Residues 129-145 are compositionally biased toward low complexity; that stretch reads PAASSPSSNNTAATTAA. N137 carries N-linked (GlcNAc...) asparagine glycosylation. Polar residues predominate over residues 152–165; that stretch reads LMPSKSPSTGTTEI. The chain crosses the membrane as a helical span at residues 206 to 228; the sequence is VAISTSTVLLCGLSAVSLLACYL. Topologically, residues 229–267 are cytoplasmic; sequence KSRQTPPLASVEMEAMEALPVTWGTSSRDEDLENCSHHL.

In terms of assembly, the interleukin-15 receptor IL15R is a heterotrimer of IL15RA, IL2RB and IL2RG. IL15RA also self-associates. Interacts with SYK. N-glycosylated and O-glycosylated. In terms of processing, a soluble form (sIL-15RA) arises from proteolytic shedding of the membrane-anchored receptor. It also binds IL-15 and thus interferes with IL-15 binding to the membrane receptor. In terms of tissue distribution, expressed in neutrophils (at protein level). Expressed in fetal brain with higher expression in the hippocampus and cerebellum than in cortex and thalamus. Higher levels of soluble sIL-15RA form in comparison with membrane-bound forms is present in all brain structures. Isoforms 1, 3, 4, 5, 6, 7, 8 and 9: Widely expressed.

It is found in the membrane. The protein resides in the nucleus membrane. Its subcellular location is the cell surface. It localises to the endoplasmic reticulum membrane. The protein localises to the golgi apparatus membrane. It is found in the cytoplasmic vesicle membrane. The protein resides in the secreted. Its subcellular location is the extracellular space. Its function is as follows. High-affinity receptor for interleukin-15. Can signal both in cis and trans where IL15R from one subset of cells presents IL15 to neighboring IL2RG-expressing cells. In neutrophils, binds and activates kinase SYK in response to IL15 stimulation. In neutrophils, required for IL15-induced phagocytosis in a SYK-dependent manner. Expression of different isoforms may alter or interfere with signal transduction. Does not bind IL15. In Homo sapiens (Human), this protein is Interleukin-15 receptor subunit alpha (IL15RA).